The primary structure comprises 622 residues: Probable methionine--tRNA ligase, mitochondrial (622 aa).

Residues P67–H79 carry the 'HIGH' region motif. The 'KMSKS' region signature appears at K366–S370. ATP is bound at residue K369. Residues L592–A622 form a disordered region. The segment covering G610–A622 has biased composition (low complexity).

Belongs to the class-I aminoacyl-tRNA synthetase family.

Its subcellular location is the mitochondrion matrix. The catalysed reaction is tRNA(Met) + L-methionine + ATP = L-methionyl-tRNA(Met) + AMP + diphosphate. In Neurospora crassa (strain ATCC 24698 / 74-OR23-1A / CBS 708.71 / DSM 1257 / FGSC 987), this protein is Probable methionine--tRNA ligase, mitochondrial.